A 543-amino-acid polypeptide reads, in one-letter code: Zinc finger protein egl-43 (543 aa).

A positive regulatory (PR) domain region spans residues 2 to 62; it reads SIDTDFLTSV…NLIKEADDGE (61 aa). 2 C2H2-type zinc fingers span residues 159 to 181 and 187 to 209; these read HKCG…SHIH and FRCH…RRVH. Residues 213-233 form a C2H2-type 3; atypical zinc finger; that stretch reads WTCPTCQSQMPSQAALTKHRP. The tract at residues 299–380 is disordered; the sequence is PDAECSSGHA…TSTKKRPTSH (82 aa). The span at 306–317 shows a compositional bias: polar residues; that stretch reads GHASESSPTTTE. The segment covering 335–348 has biased composition (basic and acidic residues); sequence TTSKSDDGEDRDSI. C2H2-type zinc fingers lie at residues 444–466 and 472–495; these read YTCK…LRTH and YKCQ…RNIH. A disordered region spans residues 496–543; it reads NKPNTSLTPHNHHRQRSLHNSTSTSTTTTTVHHPLLHLPGTSVPVPKV. The segment covering 513-533 has biased composition (low complexity); it reads LHNSTSTSTTTTTVHHPLLHL.

The protein localises to the nucleus. In terms of biological role, probable transcription factor, required for migration of the hermaphrodite-specific motor neurons (HSNs) from the tail to the gonad primordium during HSN cell differentiation. Required for phasmid neuron development. Required to specify the pi-cell fate of ventral uterine precursor cell (VU) cells. Probable transcription factor, involved in lin-12 (Notch)-dependent anchor cell (AC) and ventral uterine (VU) precursor cell fate specification and in AC invasion. Prevents AC proliferation after AC cell specification by repressing lin-12 expression. May form a positive feedback loop, together with the transcription factor fos-1, that maintains mutual high levels of expression and so activates AC invasion. Its function is as follows. Dispensable for anchor cell (AC) invasion and for preventing AC proliferation. The protein is Zinc finger protein egl-43 of Caenorhabditis elegans.